Reading from the N-terminus, the 426-residue chain is Putative zinc protease AlbF (426 aa).

H66 contacts Zn(2+). E69 serves as the catalytic Proton acceptor. Zn(2+) contacts are provided by H70 and E142.

This sequence belongs to the peptidase M16 family. It depends on Zn(2+) as a cofactor.

Its function is as follows. Required for production of the bacteriocin subtilosin. Could catalyze some step in the processing of presubtilosin. This Bacillus subtilis (strain 168) protein is Putative zinc protease AlbF (albF).